We begin with the raw amino-acid sequence, 362 residues long: Spermidine/putrescine import ATP-binding protein PotA (362 aa).

In terms of domain architecture, ABC transporter spans 6-237 (ISFKHVVKSY…PINHYVADFI (232 aa)). Residue 39–46 (GPSGCGKT) participates in ATP binding.

This sequence belongs to the ABC transporter superfamily. Spermidine/putrescine importer (TC 3.A.1.11.1) family. The complex is composed of two ATP-binding proteins (PotA), two transmembrane proteins (PotB and PotC) and a solute-binding protein (PotD).

Its subcellular location is the cell membrane. It carries out the reaction ATP + H2O + polyamine-[polyamine-binding protein]Side 1 = ADP + phosphate + polyamineSide 2 + [polyamine-binding protein]Side 1.. Part of the ABC transporter complex PotABCD involved in spermidine/putrescine import. Responsible for energy coupling to the transport system. In Ligilactobacillus salivarius (strain UCC118) (Lactobacillus salivarius), this protein is Spermidine/putrescine import ATP-binding protein PotA.